A 276-amino-acid chain; its full sequence is C-type lectin domain family 12 member B (276 aa).

Over M1–A43 the chain is Cytoplasmic. Residues V5–L10 carry the ITIM motif motif. The residue at position 7 (Y7) is a Phosphotyrosine. The chain crosses the membrane as a helical; Signal-anchor for type II membrane protein span at residues L44–F64. At L65–D276 the chain is on the extracellular side. N-linked (GlcNAc...) asparagine glycosylation is found at N91, N176, and N237. In terms of domain architecture, C-type lectin spans Y150–E264. 2 disulfide bridges follow: C172-C263 and C242-C255.

As to quaternary structure, homodimer. Interacts (via ITIM motif) with PTPN6. Interacts (via ITIM motif) with PTPN11; this interaction triggers dephosphorylation and activation of PTPN11. Post-translationally, N-glycosylated. Detected in colon, heart, kidney, liver, lung, mammary gland, ovary, spleen and testis. Expressed in melanocytes (at protein level).

The protein localises to the cell membrane. Inhibitory receptor postulated to negatively regulate immune and non-immune functions. Upon phosphorylation, recruits SH2 domain-containing PTPN6 and PTPN11 phosphatases to its ITIM motif and antagonizes activation signals. Although it inhibits KLRK1/NKG2D-mediated signaling, it does not bind known ligands of KLRK1/NKG2D and therefore is not its inhibitory counterpart. May limit activation of myeloid cell subsets in response to infection or tissue inflammation. May protect target cells against natural killer cell-mediated lysis. May negatively regulate cell cycle and differentiation of melanocytes via inactivation of STAT3. This chain is C-type lectin domain family 12 member B, found in Homo sapiens (Human).